The following is a 122-amino-acid chain: Probable non-specific lipid-transfer protein 3 (122 aa).

The first 29 residues, 1 to 29 (MARLNSKAVAAAVVLAAVVLMMAGREASA), serve as a signal peptide directing secretion. Cystine bridges form between Cys-33/Cys-81, Cys-43/Cys-58, Cys-59/Cys-104, and Cys-79/Cys-118.

Belongs to the plant LTP family. In terms of tissue distribution, expressed in phloem. Also detected in the epidermis near the vascular tissues in resistant plants infected by Hessian fly larvae.

Its function is as follows. Plant non-specific lipid-transfer proteins transfer phospholipids as well as galactolipids across membranes. May play a role in wax or cutin deposition in the cell walls of expanding epidermal cells and certain secretory tissues. The polypeptide is Probable non-specific lipid-transfer protein 3 (LTP3) (Triticum aestivum (Wheat)).